A 212-amino-acid polypeptide reads, in one-letter code: Acyl-homoserine-lactone synthase (212 aa).

Belongs to the autoinducer synthase family.

The catalysed reaction is a fatty acyl-[ACP] + S-adenosyl-L-methionine = an N-acyl-L-homoserine lactone + S-methyl-5'-thioadenosine + holo-[ACP] + H(+). Functionally, required for the synthesis of OHHL (N-(3-oxohexanoyl)-L-homoserine lactone), an autoinducer molecule which binds to TraR and thus acts in the control of conjugal transfer. This is Acyl-homoserine-lactone synthase (traI) from Rhizobium radiobacter (Agrobacterium tumefaciens).